The primary structure comprises 255 residues: Proteasome subunit alpha 2 (255 aa).

Residues 229-255 form a disordered region; the sequence is AGSSLEEMLPTPAATEDAPPANGDAPS. Positions 238–249 are enriched in low complexity; the sequence is PTPAATEDAPPA.

The protein belongs to the peptidase T1A family. The 20S proteasome core is composed of 14 alpha and 14 beta subunits that assemble into four stacked heptameric rings, resulting in a barrel-shaped structure. The two inner rings, each composed of seven catalytic beta subunits, are sandwiched by two outer rings, each composed of seven alpha subunits. All four combinations of alpha- and beta-subunits (beta2-alpha1, beta2-alpha2, beta1-alpha2 and beta1-alpha1) yield fully assembled and proteolytically active proteasomes. The catalytic chamber with the active sites is on the inside of the barrel. Has probably a gated structure, the ends of the cylinder being occluded by the N-termini of the alpha-subunits. Is likely capped by the proteasome-associated ATPase, ARC. Post-translationally, the N-terminus is blocked.

It is found in the cytoplasm. It functions in the pathway protein degradation; proteasomal Pup-dependent pathway. With respect to regulation, the formation of the proteasomal ATPase ARC-20S proteasome complex, likely via the docking of the C-termini of ARC into the intersubunit pockets in the alpha-rings, may trigger opening of the gate for substrate entry. Interconversion between the open-gate and close-gate conformations leads to a dynamic regulation of the 20S proteasome proteolysis activity. Component of the proteasome core, a large protease complex with broad specificity involved in protein degradation. The R.erythropolis proteasomes are able to cleave oligopeptides after Tyr, Phe and Leu, very poorly after Arg but not after Glu. Thus, displays chymotrypsin-like activity, low trypsin-like activity but no caspase-like activity. The sequence is that of Proteasome subunit alpha 2 from Rhodococcus erythropolis (Arthrobacter picolinophilus).